Reading from the N-terminus, the 95-residue chain is Protein Vpr (95 aa).

The segment at 1–42 (MEQAPEDQGPQREPYNEWALELLEDLKNEALRHFPRPWLHGL) is homooligomerization. Residues Ser79, Ser93, and Ser95 each carry the phosphoserine; by host modification.

Belongs to the HIV-1 VPR protein family. Homooligomer, may form homodimer. Interacts with p6-gag region of the Pr55 Gag precursor protein through a (Leu-X-X)4 motif near the C-terminus of the P6gag protein. Interacts with host UNG. May interact with host RAD23A/HHR23A. Interacts with host VPRBP/DCAF1, leading to hijack the CUL4A-RBX1-DDB1-DCAF1/VPRBP complex, mediating ubiquitination of host proteins such as TERT and ZGPAT and arrest of the cell cycle in G2 phase. Phosphorylated on several residues by host. These phosphorylations regulate VPR activity for the nuclear import of the HIV-1 pre-integration complex.

The protein resides in the virion. It is found in the host nucleus. Its subcellular location is the host extracellular space. In terms of biological role, during virus replication, may deplete host UNG protein, and incude G2-M cell cycle arrest. Acts by targeting specific host proteins for degradation by the 26S proteasome, through association with the cellular CUL4A-DDB1 E3 ligase complex by direct interaction with host VPRPB/DCAF-1. Cell cycle arrest reportedly occurs within hours of infection and is not blocked by antiviral agents, suggesting that it is initiated by the VPR carried into the virion. Additionally, VPR induces apoptosis in a cell cycle dependent manner suggesting that these two effects are mechanistically linked. Detected in the serum and cerebrospinal fluid of AIDS patient, VPR may also induce cell death to bystander cells. During virus entry, plays a role in the transport of the viral pre-integration (PIC) complex to the host nucleus. This function is crucial for viral infection of non-dividing macrophages. May act directly at the nuclear pore complex, by binding nucleoporins phenylalanine-glycine (FG)-repeat regions. The polypeptide is Protein Vpr (Pan troglodytes (Chimpanzee)).